The primary structure comprises 213 residues: tRNA (guanine-N(7)-)-methyltransferase (213 aa).

S-adenosyl-L-methionine contacts are provided by E38, E63, D91, and D113. The active site involves D113. Substrate-binding positions include K117, D149, and 192 to 195 (TEYE).

It belongs to the class I-like SAM-binding methyltransferase superfamily. TrmB family.

It carries out the reaction guanosine(46) in tRNA + S-adenosyl-L-methionine = N(7)-methylguanosine(46) in tRNA + S-adenosyl-L-homocysteine. It participates in tRNA modification; N(7)-methylguanine-tRNA biosynthesis. Catalyzes the formation of N(7)-methylguanine at position 46 (m7G46) in tRNA. This is tRNA (guanine-N(7)-)-methyltransferase from Mycoplasmoides gallisepticum (strain R(low / passage 15 / clone 2)) (Mycoplasma gallisepticum).